Reading from the N-terminus, the 1137-residue chain is AP-4 complex subunit epsilon-1 (1137 aa).

Serine 700 and serine 857 each carry phosphoserine. The tract at residues serine 727–serine 1137 is interaction with TEPSIN.

This sequence belongs to the adaptor complexes large subunit family. In terms of assembly, adaptor protein complex 4 (AP-4) is a heterotetramer composed of two large adaptins (epsilon-type subunit AP4E1 and beta-type subunit AP4B1), a medium adaptin (mu-type subunit AP4M1) and a small adaptin (sigma-type AP4S1). Interacts with TEPSIN. Interacts with GRIA2; probably indirect it mediates the somatodendritic localization of GRIA2 in neurons. Widely expressed.

The protein localises to the golgi apparatus. It localises to the trans-Golgi network membrane. Component of the adaptor protein complex 4 (AP-4). Adaptor protein complexes are vesicle coat components involved both in vesicle formation and cargo selection. They control the vesicular transport of proteins in different trafficking pathways. AP-4 forms a non clathrin-associated coat on vesicles departing the trans-Golgi network (TGN) and may be involved in the targeting of proteins from the trans-Golgi network (TGN) to the endosomal-lysosomal system. It is also involved in protein sorting to the basolateral membrane in epithelial cells and the proper asymmetric localization of somatodendritic proteins in neurons. AP-4 is involved in the recognition and binding of tyrosine-based sorting signals found in the cytoplasmic part of cargos, but may also recognize other types of sorting signal. The sequence is that of AP-4 complex subunit epsilon-1 from Homo sapiens (Human).